Here is a 160-residue protein sequence, read N- to C-terminus: MTNTPSDQPLKQVNQRGAARLAAVQALYQMDVGGTGVLEIVAEYEEHRLGKELDGDTYLRADASWFRSIVAGVVRDQRKLDPLIGSALQDDWALSRLDSTVRAILRAGTFEILERKDVPVPVIVTEYVEIAKAFFQDEEPKLVNAVLDRIAKQVRGDQRK.

It belongs to the NusB family.

In terms of biological role, involved in transcription antitermination. Required for transcription of ribosomal RNA (rRNA) genes. Binds specifically to the boxA antiterminator sequence of the ribosomal RNA (rrn) operons. This chain is Transcription antitermination protein NusB, found in Rhizobium meliloti (strain 1021) (Ensifer meliloti).